A 406-amino-acid polypeptide reads, in one-letter code: MSLGIPLSQLIVESPKPLSSGITGLDEILNLGFQARSIYEIFGPPGIGKTNFGIQLVCNSLEGIQQSEINDDKILWIETFQEMPINILRERFQKFKIVEENVKRVRITKFGQLLYFFQNLFKLSQSVRYKLVIIDGFSQLVCDHLCTLSKRGGGMIDKTIHELKCRHLILIFTVMTKYTHSTGSTIIVLNDCMNTAFQSNEFESLEEYYEILDDGSNFFVNSNNERRKNNVHILKSALVANIAMGSKDSTWEVFLRDRIGLFRDWNEQVDETVFVKSKRVKASSSQSNEGCTTIKEMRINKRNFENLRIAIVFNLHGEDRKREGRNLKRSRSSDDRNYIVKFDFDKATGQLRDIIDLKPDTANIASFPTLSTSSSSCSQVFNNIDSNDNPLPNAEGKEEIIYDSEG.

43-50 (GPPGIGKT) contacts ATP. The disordered stretch occupies residues 385 to 406 (DSNDNPLPNAEGKEEIIYDSEG).

This sequence belongs to the RecA family. RAD55 subfamily.

It localises to the nucleus. Functionally, required for radiation resistance and meiotic viability and presumably acts in recombination and recombinational DNA repair pathways. The sequence is that of DNA repair protein RAD55 (RAD55) from Saccharomyces cerevisiae (strain ATCC 204508 / S288c) (Baker's yeast).